Here is a 707-residue protein sequence, read N- to C-terminus: Polyribonucleotide nucleotidyltransferase (707 aa).

Positions 484 and 490 each coordinate Mg(2+). Positions 551–610 constitute a KH domain; that stretch reads PRVVRMVVNPEKIRDIIGPAGKTITKIISETGVKIDIEEDGRLYITAPNLEAGERAKQMI. The region spanning 620–688 is the S1 motif domain; the sequence is GGIYLGKVLR…KLGRIVLSRK (69 aa). Positions 688–707 are disordered; the sequence is KDAMPDEEESDNRKSDNRKK. Residues 698 to 707 show a composition bias toward basic and acidic residues; sequence DNRKSDNRKK.

Belongs to the polyribonucleotide nucleotidyltransferase family. It depends on Mg(2+) as a cofactor.

It is found in the cytoplasm. The catalysed reaction is RNA(n+1) + phosphate = RNA(n) + a ribonucleoside 5'-diphosphate. Involved in mRNA degradation. Catalyzes the phosphorolysis of single-stranded polyribonucleotides processively in the 3'- to 5'-direction. The sequence is that of Polyribonucleotide nucleotidyltransferase from Caldanaerobacter subterraneus subsp. tengcongensis (strain DSM 15242 / JCM 11007 / NBRC 100824 / MB4) (Thermoanaerobacter tengcongensis).